A 619-amino-acid polypeptide reads, in one-letter code: Probable Xaa-Pro aminopeptidase P (619 aa).

Mn(2+)-binding residues include D415, D426, E524, and E538.

It belongs to the peptidase M24B family. It depends on Mn(2+) as a cofactor.

The enzyme catalyses Release of any N-terminal amino acid, including proline, that is linked to proline, even from a dipeptide or tripeptide.. Its function is as follows. Catalyzes the removal of a penultimate prolyl residue from the N-termini of peptides. This is Probable Xaa-Pro aminopeptidase P (AMPP) from Fusarium vanettenii (strain ATCC MYA-4622 / CBS 123669 / FGSC 9596 / NRRL 45880 / 77-13-4) (Fusarium solani subsp. pisi).